The chain runs to 482 residues: ATP synthase subunit beta (482 aa).

168-175 lines the ATP pocket; the sequence is GGAGVGKT.

The protein belongs to the ATPase alpha/beta chains family. In terms of assembly, F-type ATPases have 2 components, CF(1) - the catalytic core - and CF(0) - the membrane proton channel. CF(1) has five subunits: alpha(3), beta(3), gamma(1), delta(1), epsilon(1). CF(0) has three main subunits: a(1), b(2) and c(9-12). The alpha and beta chains form an alternating ring which encloses part of the gamma chain. CF(1) is attached to CF(0) by a central stalk formed by the gamma and epsilon chains, while a peripheral stalk is formed by the delta and b chains.

It is found in the cell membrane. It carries out the reaction ATP + H2O + 4 H(+)(in) = ADP + phosphate + 5 H(+)(out). Functionally, produces ATP from ADP in the presence of a proton gradient across the membrane. The catalytic sites are hosted primarily by the beta subunits. The polypeptide is ATP synthase subunit beta (Nocardia farcinica (strain IFM 10152)).